The following is a 218-amino-acid chain: Thyroid hormone receptor alpha (218 aa).

Residues proline 1–aspartate 215 enclose the NR LBD domain. Arginine 36 and serine 85 together coordinate 3,3',5-triiodo-L-thyronine.

Belongs to the nuclear hormone receptor family. NR1 subfamily.

It is found in the nucleus. In terms of biological role, nuclear hormone receptor that can act as a repressor or activator of transcription. High affinity receptor for thyroid hormones, including triiodothyronine and thyroxine. The polypeptide is Thyroid hormone receptor alpha (thra) (Oncorhynchus mykiss (Rainbow trout)).